Here is a 159-residue protein sequence, read N- to C-terminus: Serine-protein kinase RsbW (159 aa).

It belongs to the anti-sigma-factor family.

It catalyses the reaction L-seryl-[protein] + ATP = O-phospho-L-seryl-[protein] + ADP + H(+). The catalysed reaction is L-threonyl-[protein] + ATP = O-phospho-L-threonyl-[protein] + ADP + H(+). Negative regulator of sigma-B activity. Phosphorylates and inactivates its specific antagonist protein, RsbV. Upon phosphorylation of RsbV, RsbW is released and binds to sigma-B, thereby blocking its ability to form an RNA polymerase holoenzyme (E-sigma-B). The chain is Serine-protein kinase RsbW from Staphylococcus epidermidis.